Here is a 566-residue protein sequence, read N- to C-terminus: Cyclin-dependent kinase-like 2 (566 aa).

The region spanning 4-287 (YENLGLVGEG…CAELLHHDFF (284 aa)) is the Protein kinase domain. Residues 10–18 (VGEGSYGMV) and Lys-33 contribute to the ATP site. A [NKR]KIAxRE motif is present at residues 45 to 51 (KKIAMRE). The active-site Proton acceptor is the Asp-126. Disordered regions lie at residues 307 to 334 (DARNISLSKKSQNRKKEKEKDDSLGEER) and 545 to 566 (QVSGSPLSDGSEADSPWMEHQH). Residues 320-334 (RKKEKEKDDSLGEER) show a composition bias toward basic and acidic residues.

The protein belongs to the protein kinase superfamily. CMGC Ser/Thr protein kinase family. CDC2/CDKX subfamily.

The protein localises to the cytoplasm. It is found in the nucleus. It carries out the reaction L-seryl-[protein] + ATP = O-phospho-L-seryl-[protein] + ADP + H(+). The enzyme catalyses L-threonyl-[protein] + ATP = O-phospho-L-threonyl-[protein] + ADP + H(+). This is Cyclin-dependent kinase-like 2 from Oryctolagus cuniculus (Rabbit).